The sequence spans 199 residues: Recombination protein RecR (199 aa).

Residues cysteine 60–cysteine 75 form a C4-type zinc finger. The Toprim domain maps to serine 83–proline 178.

It belongs to the RecR family.

In terms of biological role, may play a role in DNA repair. It seems to be involved in an RecBC-independent recombinational process of DNA repair. It may act with RecF and RecO. The protein is Recombination protein RecR of Paracidovorax citrulli (strain AAC00-1) (Acidovorax citrulli).